We begin with the raw amino-acid sequence, 450 residues long: Tubulin alpha chain (450 aa).

Glutamine 11 provides a ligand contact to GTP. Lysine 40 is subject to N6-acetyllysine. Glutamate 71, serine 140, glycine 144, threonine 145, threonine 179, asparagine 206, and asparagine 228 together coordinate GTP. Glutamate 71 is a Mg(2+) binding site. Glutamate 254 is a catalytic residue.

It belongs to the tubulin family. As to quaternary structure, dimer of alpha and beta chains. A typical microtubule is a hollow water-filled tube with an outer diameter of 25 nm and an inner diameter of 15 nM. Alpha-beta heterodimers associate head-to-tail to form protofilaments running lengthwise along the microtubule wall with the beta-tubulin subunit facing the microtubule plus end conferring a structural polarity. Microtubules usually have 13 protofilaments but different protofilament numbers can be found in some organisms and specialized cells. Mg(2+) is required as a cofactor. Undergoes a tyrosination/detyrosination cycle, the cyclic removal and re-addition of a C-terminal tyrosine residue by the enzymes tubulin tyrosine carboxypeptidase (TTCP) and tubulin tyrosine ligase (TTL), respectively. In terms of processing, acetylation of alpha chains at Lys-40 stabilizes microtubules and affects affinity and processivity of microtubule motors. This modification has a role in multiple cellular functions, ranging from cell motility, cell cycle progression or cell differentiation to intracellular trafficking and signaling.

It localises to the cytoplasm. The protein localises to the cytoskeleton. It catalyses the reaction GTP + H2O = GDP + phosphate + H(+). In terms of biological role, tubulin is the major constituent of microtubules, a cylinder consisting of laterally associated linear protofilaments composed of alpha- and beta-tubulin heterodimers. Microtubules grow by the addition of GTP-tubulin dimers to the microtubule end, where a stabilizing cap forms. Below the cap, tubulin dimers are in GDP-bound state, owing to GTPase activity of alpha-tubulin. The sequence is that of Tubulin alpha chain from Haemonchus contortus (Barber pole worm).